Here is a 729-residue protein sequence, read N- to C-terminus: DNA topoisomerase 3 (729 aa).

One can recognise a Toprim domain in the interval 3–136; the sequence is KSVVIAEKPS…IKRLWISSVT (134 aa). Residues Glu9 and Asp105 each coordinate Mg(2+). The Topo IA-type catalytic domain occupies 153 to 594; the sequence is YDNLYASAVA…EMKNYTKEIV (442 aa). Residues 187–192 are interaction with DNA; it reads NCGRVQ. The active-site O-(5'-phospho-DNA)-tyrosine intermediate is the Tyr310. Over residues 686-713 the composition is skewed to basic and acidic residues; that stretch reads ERRKKESGNKADKRDVQKYMKQQKKEEE. The segment at 686 to 718 is disordered; that stretch reads ERRKKESGNKADKRDVQKYMKQQKKEEEPLNNP.

The protein belongs to the type IA topoisomerase family. Requires Mg(2+) as cofactor.

It catalyses the reaction ATP-independent breakage of single-stranded DNA, followed by passage and rejoining.. Releases the supercoiling and torsional tension of DNA, which is introduced during the DNA replication and transcription, by transiently cleaving and rejoining one strand of the DNA duplex. Introduces a single-strand break via transesterification at a target site in duplex DNA. The scissile phosphodiester is attacked by the catalytic tyrosine of the enzyme, resulting in the formation of a DNA-(5'-phosphotyrosyl)-enzyme intermediate and the expulsion of a 3'-OH DNA strand. The free DNA strand then undergoes passage around the unbroken strand, thus removing DNA supercoils. Finally, in the religation step, the DNA 3'-OH attacks the covalent intermediate to expel the active-site tyrosine and restore the DNA phosphodiester backbone. The sequence is that of DNA topoisomerase 3 from Bacillus cereus (strain ZK / E33L).